Here is a 583-residue protein sequence, read N- to C-terminus: GTP diphosphokinase CRSH1, chloroplastic (583 aa).

Residues 1 to 13 (MATAATTSAAAIP) show a composition bias toward low complexity. Residues 1 to 68 (MATAATTSAA…SSSSSTPAEG (68 aa)) are disordered. Residues 1-69 (MATAATTSAA…SSSSTPAEGG (69 aa)) constitute a chloroplast transit peptide. Positions 19–39 (RRQHPHPRRPGLRPRRLHRLR) are enriched in basic residues. A compositionally biased stretch (low complexity) spans 40–66 (LPAQAAAAAAASSPSTSSSSSSSSTPA). The 101-residue stretch at 119–219 (ALARALAIAA…LELALKLDMM (101 aa)) folds into the HD domain. 2 EF-hand domains span residues 473-508 (GDSN…LGAG) and 510-542 (KDAK…IELM). Residues D486, N488, D490, R492, E497, D520, N522, D524, S526, and E531 each coordinate Ca(2+).

The protein belongs to the RelA/SpoT family. As to expression, expressed in roots and shoots.

It is found in the plastid. The protein localises to the chloroplast. It carries out the reaction GTP + ATP = guanosine 3'-diphosphate 5'-triphosphate + AMP. Its activity is regulated as follows. Activated by calcium. Functionally, possesses calcium-dependent ppGpp (guanosine 3'-diphosphate 5'-diphosphate) synthetase activity in vitro and is able to functionally complement E.coli relA mutants. May be involved in a rapid plant ppGpp-mediated response to pathogens and other stresses. The sequence is that of GTP diphosphokinase CRSH1, chloroplastic from Oryza sativa subsp. japonica (Rice).